The primary structure comprises 490 residues: Adenylosuccinate synthetase, chloroplastic (490 aa).

A chloroplast-targeting transit peptide spans methionine 1–alanine 45. Serine 46 is modified (N-acetylserine). GTP contacts are provided by residues glycine 77 to lysine 83 and glycine 105 to threonine 107. Aspartate 78 serves as the catalytic Proton acceptor. The Mg(2+) site is built by aspartate 78 and glycine 105. Residues aspartate 78–lysine 81, asparagine 103–histidine 106, threonine 195, arginine 209, glutamine 289, threonine 304, and arginine 368 contribute to the IMP site. Catalysis depends on histidine 106, which acts as the Proton donor. Threonine 364–arginine 370 lines the substrate pocket. GTP contacts are provided by residues arginine 370, lysine 396–aspartate 398, and glycine 479–glycine 481.

Belongs to the adenylosuccinate synthetase family. As to quaternary structure, homodimer. Mg(2+) is required as a cofactor.

It localises to the plastid. The protein localises to the chloroplast. The enzyme catalyses IMP + L-aspartate + GTP = N(6)-(1,2-dicarboxyethyl)-AMP + GDP + phosphate + 2 H(+). The protein operates within purine metabolism; AMP biosynthesis via de novo pathway; AMP from IMP: step 1/2. Its function is as follows. Plays an important role in the de novo pathway and in the salvage pathway of purine nucleotide biosynthesis. Catalyzes the first committed step in the biosynthesis of AMP from IMP. The polypeptide is Adenylosuccinate synthetase, chloroplastic (Arabidopsis thaliana (Mouse-ear cress)).